The following is a 120-amino-acid chain: Aspartate 1-decarboxylase (120 aa).

The Schiff-base intermediate with substrate; via pyruvic acid role is filled by serine 25. Residue serine 25 is modified to Pyruvic acid (Ser). A substrate-binding site is contributed by threonine 57. The active-site Proton donor is tyrosine 58. 73–75 (GAA) contributes to the substrate binding site.

Belongs to the PanD family. In terms of assembly, heterooctamer of four alpha and four beta subunits. Requires pyruvate as cofactor. In terms of processing, is synthesized initially as an inactive proenzyme, which is activated by self-cleavage at a specific serine bond to produce a beta-subunit with a hydroxyl group at its C-terminus and an alpha-subunit with a pyruvoyl group at its N-terminus.

It is found in the cytoplasm. The catalysed reaction is L-aspartate + H(+) = beta-alanine + CO2. Its pathway is cofactor biosynthesis; (R)-pantothenate biosynthesis; beta-alanine from L-aspartate: step 1/1. Functionally, catalyzes the pyruvoyl-dependent decarboxylation of aspartate to produce beta-alanine. This chain is Aspartate 1-decarboxylase, found in Thermus thermophilus (strain ATCC 27634 / DSM 579 / HB8).